The following is a 1396-amino-acid chain: MKDLLNLLKNQNYAHEFDSIRISLASPDMIRSWSFGEVKKPETINYRTFKPERDGLFCAKIFGPIKDYECLCGKYKRLKHRGVICEKCGVEVAPANVRRERMGHIELASPVAHIWFLKSLPSRIGLLLDMTLRDIERVLYFESFIVIDPGMTTLEKGQLLSDEQYYEALEEFGDEFDARMGAEAIQGLLADLELEDEIERLREEIPNTNSETKIKKLSKRLKLMEAFAESGNHPEWMILTVLPVLPPDLRPLVPLDGGRFATSDLNDLYRRVINRNNRLKRLLELNAPDIIVRNEKRMLQESVDALLDNGRRGRAITGSNKRPLKSLADMIKGKQGRFRQNLLGKRVDYSGRSVIVVGPTLRLHQCGLPKKMALELFKPFIFSKLEHRGLATTIKAAKKMVEREEAVVWDILDEVIREHPVMLNRAPTLHRLGIQAFEPVLIEGKAIQLHPLVCTAYNADFDGDQMAVHVPLTLEAQLEARALMMSTNNILSPANGDPIIVPSQDVVLGLYFMTRERINAKGEGMVFSDIKEVQRAYGAKKVDLQAKVKVRIRDVVIDEDRNKTVTVSVLDTTVGRALLFDIFPEGLAFSLVNQNMTKKAISRLINACYRRVGLKETVIFADQIMYTGFYYATLSGASIGVNDFVIPDEKAKIIDAAENEVKEIESQFASGLLTQGEKYNKVIDIWSRANDKVSKAMMDRLGKEKVVNKDGKEVDQDSFNSVYIMADSGARGSAAQIRQLAGMRGLMAKPDGSIIETPITANFREGLNVLQYFISTHGARKGLADTALKTANSGYLTRRLVDVAQDLVVTDLDCGTSEGLLVTPHIEGGDVVVPLGDRVLGRVTASDVYSASDNQNVVVPAGTLLDETTVETLEKAGVDEILVRSPITCETKYGVCASCYGRDLARGHLVNVGEAIGVIAAQSIGEPGTQLTMRTFHIGGAASRASAVDNIQVKHGGTVRLHNLKHIERKNGNLVVVSRSSALAIADEAGREREWYKLPYGVELSVKQGQQVAAGEIVAKWDPHTHPIITEVGGKAIFVGVEEGITVKTQTDEITGLSNIEVMDPKDRPASGKDIRPMLQLLDANGKEMKFPGTDTPVQYFLPPNSLFSLKNGDTIEVGDVIARIPQESSKTRDITGGLPRVADLFEARKPKEPSILAEISGIVSFGKETKGKKRLVITPTDNTDPFEILIPKWRQLNVFEGESVEKGEVISDGPSNPHDILRLLGVGELAKYIINEIQDVYRLQGVVINDKHIEVIVRQMIRKVDVLSSGDTTLIKGDQVELVKLLEENEKAGEEAKMPARYERVLLGITKASLATESFISAASFQETTRVLTEAAVTGKQDHLRGLKENVVVGRLIPAGTGSAYHQERRRKRMQKEGGVSAADVVQALSAELNK.

Residues Cys70, Cys72, Cys85, and Cys88 each contribute to the Zn(2+) site. Asp460, Asp462, and Asp464 together coordinate Mg(2+). Zn(2+) is bound by residues Cys814, Cys889, Cys896, and Cys899.

The protein belongs to the RNA polymerase beta' chain family. The RNAP catalytic core consists of 2 alpha, 1 beta, 1 beta' and 1 omega subunit. When a sigma factor is associated with the core the holoenzyme is formed, which can initiate transcription. It depends on Mg(2+) as a cofactor. Requires Zn(2+) as cofactor.

It catalyses the reaction RNA(n) + a ribonucleoside 5'-triphosphate = RNA(n+1) + diphosphate. In terms of biological role, DNA-dependent RNA polymerase catalyzes the transcription of DNA into RNA using the four ribonucleoside triphosphates as substrates. This is DNA-directed RNA polymerase subunit beta' from Hahella chejuensis (strain KCTC 2396).